The primary structure comprises 52 residues: uncharacterized protein (52 aa).

This is an uncharacterized protein from Homo sapiens (Human).